The chain runs to 185 residues: ATP synthase subunit delta (185 aa).

Belongs to the ATPase delta chain family. In terms of assembly, F-type ATPases have 2 components, F(1) - the catalytic core - and F(0) - the membrane proton channel. F(1) has five subunits: alpha(3), beta(3), gamma(1), delta(1), epsilon(1). F(0) has three main subunits: a(1), b(2) and c(10-14). The alpha and beta chains form an alternating ring which encloses part of the gamma chain. F(1) is attached to F(0) by a central stalk formed by the gamma and epsilon chains, while a peripheral stalk is formed by the delta and b chains.

It is found in the cell inner membrane. F(1)F(0) ATP synthase produces ATP from ADP in the presence of a proton or sodium gradient. F-type ATPases consist of two structural domains, F(1) containing the extramembraneous catalytic core and F(0) containing the membrane proton channel, linked together by a central stalk and a peripheral stalk. During catalysis, ATP synthesis in the catalytic domain of F(1) is coupled via a rotary mechanism of the central stalk subunits to proton translocation. Its function is as follows. This protein is part of the stalk that links CF(0) to CF(1). It either transmits conformational changes from CF(0) to CF(1) or is implicated in proton conduction. This Ehrlichia chaffeensis (strain ATCC CRL-10679 / Arkansas) protein is ATP synthase subunit delta.